The chain runs to 159 residues: Superoxide dismutase [Cu-Zn] (159 aa).

Positions 47, 49, and 64 each coordinate Cu cation. Cysteine 58 and cysteine 150 form a disulfide bridge. Zn(2+) is bound by residues histidine 64, histidine 72, histidine 81, and aspartate 84. Histidine 121 is a Cu cation binding site.

Belongs to the Cu-Zn superoxide dismutase family. It depends on Cu cation as a cofactor. The cofactor is Zn(2+).

It is found in the cytoplasm. The enzyme catalyses 2 superoxide + 2 H(+) = H2O2 + O2. In terms of biological role, destroys radicals which are normally produced within the cells and which are toxic to biological systems. The polypeptide is Superoxide dismutase [Cu-Zn] (SOD) (Haemonchus contortus (Barber pole worm)).